Here is a 447-residue protein sequence, read N- to C-terminus: N-succinylarginine dihydrolase (447 aa).

Substrate is bound by residues 19–28 (AGLSFGNEAS), Asn110, and 137–138 (HR). Glu174 is an active-site residue. Arg213 provides a ligand contact to substrate. The active site involves His249. Substrate contacts are provided by Asp251 and Asn364. Cys370 (nucleophile) is an active-site residue.

The protein belongs to the succinylarginine dihydrolase family. Homodimer.

The catalysed reaction is N(2)-succinyl-L-arginine + 2 H2O + 2 H(+) = N(2)-succinyl-L-ornithine + 2 NH4(+) + CO2. It participates in amino-acid degradation; L-arginine degradation via AST pathway; L-glutamate and succinate from L-arginine: step 2/5. Catalyzes the hydrolysis of N(2)-succinylarginine into N(2)-succinylornithine, ammonia and CO(2). The chain is N-succinylarginine dihydrolase from Yersinia enterocolitica serotype O:8 / biotype 1B (strain NCTC 13174 / 8081).